Consider the following 264-residue polypeptide: tRNA pseudouridine synthase A (264 aa).

Asp51 serves as the catalytic Nucleophile. Residue Tyr109 coordinates substrate.

This sequence belongs to the tRNA pseudouridine synthase TruA family. As to quaternary structure, homodimer.

It carries out the reaction uridine(38/39/40) in tRNA = pseudouridine(38/39/40) in tRNA. Formation of pseudouridine at positions 38, 39 and 40 in the anticodon stem and loop of transfer RNAs. The protein is tRNA pseudouridine synthase A of Photorhabdus laumondii subsp. laumondii (strain DSM 15139 / CIP 105565 / TT01) (Photorhabdus luminescens subsp. laumondii).